A 498-amino-acid polypeptide reads, in one-letter code: Ammonium transporter 3 member 1 (498 aa).

11 helical membrane passes run 33 to 53 (ISATLVGMQSVPGLVILYGSI), 58 to 78 (WAVNSAFMALYAFAAVWLCWV), 143 to 163 (MVYFQCVFAAITLILLAGSLL), 171 to 191 (WMLFVPLWLTFSYTVGAFSLW), 206 to 226 (GGYVIHLSSGVAGFTAAYWVG), 241 to 261 (VLLMLTGAGILWMGWAGFNGG), 276 to 296 (NTNICAATSLLVWTCLDVIFF), 301 to 321 (VIGAVQGMITGLVCITPGAGL), 325 to 345 (WAAIVMGILSGSIPWFTMMVV), 369 to 389 (GFLGGATTGLFAEPVLCSLFL), and 412 to 432 (VAGALFIICWNVVVTSLVCLA). A disordered region spans residues 478-498 (DNNDTHHNNNKAAPSGVTQNV). The segment covering 487–498 (NKAAPSGVTQNV) has biased composition (polar residues).

The protein belongs to the ammonia transporter channel (TC 1.A.11.2) family. In terms of tissue distribution, expressed in root.

It is found in the membrane. In terms of biological role, involved in ammonium transport. The chain is Ammonium transporter 3 member 1 (AMT3-1) from Oryza sativa subsp. japonica (Rice).